A 362-amino-acid chain; its full sequence is 2-aminoethylphosphonate--pyruvate transaminase (362 aa).

Lys-193 is modified (N6-(pyridoxal phosphate)lysine).

The protein belongs to the class-V pyridoxal-phosphate-dependent aminotransferase family. PhnW subfamily. In terms of assembly, homodimer. The cofactor is pyridoxal 5'-phosphate.

The enzyme catalyses (2-aminoethyl)phosphonate + pyruvate = phosphonoacetaldehyde + L-alanine. In terms of biological role, involved in phosphonate degradation. This chain is 2-aminoethylphosphonate--pyruvate transaminase, found in Bacteroides fragilis (strain YCH46).